The primary structure comprises 846 residues: FNIP repeat-containing protein DDB_G0289381 (846 aa).

The span at 1 to 11 (MKLLSFKKKPS) shows a compositional bias: basic residues. Residues 1-39 (MKLLSFKKKPSLTKSQSCPDKLKNLKEQQKDPKNGANYD) are disordered. A compositionally biased stretch (basic and acidic residues) spans 20-33 (DKLKNLKEQQKDPK). FNIP repeat units lie at residues 159-193 (IPNH…FGEK), 194-239 (FNQV…FGNN), 240-283 (FDQI…FQEN), and 284-325 (FNQP…YGGD). The disordered stretch occupies residues 362–384 (SSISLDISGGGSGSGSGVNSTTT). FNIP repeat units lie at residues 458–500 (FQQL…FGDG), 501–546 (FNQQ…FGKS), and 654–693 (FNQS…MFNK). The disordered stretch occupies residues 702–734 (SNNNNENNNENNNENNNENNNENNNENNNNTNS). Residues 702–734 (SNNNNENNNENNNENNNENNNENNNENNNNTNS) are a coiled coil.

The chain is FNIP repeat-containing protein DDB_G0289381 from Dictyostelium discoideum (Social amoeba).